The following is a 374-amino-acid chain: Spore germination protein GerLB (374 aa).

Helical transmembrane passes span isoleucine 16–isoleucine 36, aspartate 44–threonine 64, proline 86–glutamate 106, threonine 122–serine 142, leucine 149–isoleucine 169, valine 192–leucine 212, alanine 227–threonine 247, phenylalanine 279–leucine 301, isoleucine 313–asparagine 333, and tyrosine 341–tyrosine 361.

The protein belongs to the amino acid-polyamine-organocation (APC) superfamily. Spore germination protein (SGP) (TC 2.A.3.9) family.

Its subcellular location is the membrane. In terms of biological role, contributes to the L-alanine germination response. The polypeptide is Spore germination protein GerLB (gerLB) (Bacillus cereus).